The sequence spans 273 residues: MSELSVSMSAAGGLPQAPLLPEAPAKVTVRNLNFYYGEHHALKNINLTLGTNRVTAFIGPSGCGKSTLLRIFNRMYDLYPGQRATGQLMLDQTNILDGKLDLNLLRARVGMVFQKPTPFPMTIYENIAFGIRLYEKISKSEMDDRVEKALRGGALWNEVKDKLNASGLSLSGGQQQRLCIARTVAVRPEVILFDEPCSALDPISTAKVEELIQELSENYTIAIVTHNMQQAARVSDKTAFMYLGELIEFDDTSKIFTSPSDRRTQDYITGRFG.

Positions Val27–Ile268 constitute an ABC transporter domain. Position 59–66 (Gly59–Ser66) interacts with ATP.

This sequence belongs to the ABC transporter superfamily. Phosphate importer (TC 3.A.1.7) family. As to quaternary structure, the complex is composed of two ATP-binding proteins (PstB), two transmembrane proteins (PstC and PstA) and a solute-binding protein (PstS).

The protein localises to the cell inner membrane. It carries out the reaction phosphate(out) + ATP + H2O = ADP + 2 phosphate(in) + H(+). In terms of biological role, part of the ABC transporter complex PstSACB involved in phosphate import. Responsible for energy coupling to the transport system. The chain is Phosphate import ATP-binding protein PstB from Bradyrhizobium diazoefficiens (strain JCM 10833 / BCRC 13528 / IAM 13628 / NBRC 14792 / USDA 110).